We begin with the raw amino-acid sequence, 541 residues long: Tyrosine-protein kinase Yes (541 aa).

G2 is lipidated: N-myristoyl glycine. C3 carries the S-palmitoyl cysteine; in membrane form lipid modification. Y32 carries the post-translational modification Phosphotyrosine. Residues 89–150 form the SH3 domain; it reads GGVTIFVALY…PSNYVVPADS (62 aa). In terms of domain architecture, SH2 spans 156-253; that stretch reads WYFGKMGRKD…GLCHKLTTVC (98 aa). A Protein kinase domain is found at 275 to 528; that stretch reads LRLEVKLGQG…YIQSFLEDYF (254 aa). ATP-binding positions include 281-289 and K303; that span reads LGQGCFGEV. 2 positions are modified to phosphotyrosine: Y334 and Y343. Residue D394 is the Proton acceptor of the active site. A Phosphotyrosine; by autocatalysis modification is found at Y424. Y535 is modified (phosphotyrosine).

This sequence belongs to the protein kinase superfamily. Tyr protein kinase family. SRC subfamily. As to quaternary structure, interacts with YAP1. Interacts with FASLG. Interacts with CTNND1; this interaction allows YES1-mediated activation of FYN and FER and subsequent phosphorylation of CTNND1. Interacts with CSF1R. Interacts with IL6ST/gp130. Interacts with SCRIB, when YES1 is in a closed conformation; the interaction facilitates YES1 autophosphorylation. In terms of processing, phosphorylated. Phosphorylation by CSK on the C-terminal tail maintains the enzyme in an inactive state. Autophosphorylation at Tyr-424 maintains enzyme activity by blocking CSK-mediated inhibition. Post-translationally, palmitoylation at Cys-3 promotes membrane localization.

It is found in the cell membrane. The protein localises to the cytoplasm. The protein resides in the cytoskeleton. It localises to the microtubule organizing center. Its subcellular location is the centrosome. It is found in the cytosol. The protein localises to the cell junction. It carries out the reaction L-tyrosyl-[protein] + ATP = O-phospho-L-tyrosyl-[protein] + ADP + H(+). Its function is as follows. Non-receptor protein tyrosine kinase that is involved in the regulation of cell growth and survival, apoptosis, cell-cell adhesion, cytoskeleton remodeling, and differentiation. Stimulation by receptor tyrosine kinases (RTKs) including EGFR, PDGFR, CSF1R and FGFR leads to recruitment of YES1 to the phosphorylated receptor, and activation and phosphorylation of downstream substrates. Upon EGFR activation, promotes the phosphorylation of PARD3 to favor epithelial tight junction assembly. Participates in the phosphorylation of specific junctional components such as CTNND1 by stimulating the FYN and FER tyrosine kinases at cell-cell contacts. Upon T-cell stimulation by CXCL12, phosphorylates collapsin response mediator protein 2/DPYSL2 and induces T-cell migration. Participates in CD95L/FASLG signaling pathway and mediates AKT-mediated cell migration. Plays a role in cell cycle progression by phosphorylating the cyclin dependent kinase 4/CDK4 thus regulating the G1 phase. Also involved in G2/M progression and cytokinesis. Catalyzes phosphorylation of organic cation transporter OCT2 which induces its transport activity. The sequence is that of Tyrosine-protein kinase Yes (Yes1) from Mus musculus (Mouse).